A 311-amino-acid polypeptide reads, in one-letter code: HTH-type transcriptional regulator PcaQ (311 aa).

One can recognise an HTH lysR-type domain in the interval 6 to 63; that stretch reads IKFRHLQTFVEVARQKSVIRAAEILHVSQPAVTKTIRELEDVLGVSLLEREGRGIRIS. The segment at residues 23–42 is a DNA-binding region (H-T-H motif); sequence VIRAAEILHVSQPAVTKTIR.

The protein belongs to the LysR transcriptional regulatory family.

Activates transcription of the pcaDCHGB operon for the catabolism of the phenolic compound protocatechuate. The protein is HTH-type transcriptional regulator PcaQ (pcaQ) of Agrobacterium fabrum (strain C58 / ATCC 33970) (Agrobacterium tumefaciens (strain C58)).